Here is a 363-residue protein sequence, read N- to C-terminus: 3-dehydroquinate synthase (363 aa).

Residues 134–135, K147, and K156 each bind NAD(+); that span reads TT. Zn(2+)-binding residues include E189, H254, and H271.

It belongs to the sugar phosphate cyclases superfamily. Dehydroquinate synthase family. Requires Co(2+) as cofactor. Zn(2+) serves as cofactor. NAD(+) is required as a cofactor.

The protein resides in the cytoplasm. It carries out the reaction 7-phospho-2-dehydro-3-deoxy-D-arabino-heptonate = 3-dehydroquinate + phosphate. The protein operates within metabolic intermediate biosynthesis; chorismate biosynthesis; chorismate from D-erythrose 4-phosphate and phosphoenolpyruvate: step 2/7. Catalyzes the conversion of 3-deoxy-D-arabino-heptulosonate 7-phosphate (DAHP) to dehydroquinate (DHQ). In Prochlorococcus marinus (strain MIT 9215), this protein is 3-dehydroquinate synthase.